Consider the following 216-residue polypeptide: Probable transaldolase (216 aa).

Lysine 83 acts as the Schiff-base intermediate with substrate in catalysis.

The protein belongs to the transaldolase family. Type 3B subfamily.

It is found in the cytoplasm. The enzyme catalyses D-sedoheptulose 7-phosphate + D-glyceraldehyde 3-phosphate = D-erythrose 4-phosphate + beta-D-fructose 6-phosphate. It functions in the pathway carbohydrate degradation; pentose phosphate pathway; D-glyceraldehyde 3-phosphate and beta-D-fructose 6-phosphate from D-ribose 5-phosphate and D-xylulose 5-phosphate (non-oxidative stage): step 2/3. Its function is as follows. Transaldolase is important for the balance of metabolites in the pentose-phosphate pathway. This Hyphomonas neptunium (strain ATCC 15444) protein is Probable transaldolase.